The chain runs to 495 residues: UDP-N-acetylmuramoyl-L-alanyl-D-glutamate--2,6-diaminopimelate ligase (495 aa).

S29 contacts UDP-N-acetyl-alpha-D-muramoyl-L-alanyl-D-glutamate. 111–117 (GTNGKTS) serves as a coordination point for ATP. Residues 153–154 (TT), S180, Q186, and R188 contribute to the UDP-N-acetyl-alpha-D-muramoyl-L-alanyl-D-glutamate site. K220 bears the N6-carboxylysine mark. Meso-2,6-diaminopimelate-binding positions include R384, 408 to 411 (DNPR), G459, and E463. A Meso-diaminopimelate recognition motif motif is present at residues 408-411 (DNPR).

It belongs to the MurCDEF family. MurE subfamily. Mg(2+) serves as cofactor. In terms of processing, carboxylation is probably crucial for Mg(2+) binding and, consequently, for the gamma-phosphate positioning of ATP.

It is found in the cytoplasm. It carries out the reaction UDP-N-acetyl-alpha-D-muramoyl-L-alanyl-D-glutamate + meso-2,6-diaminopimelate + ATP = UDP-N-acetyl-alpha-D-muramoyl-L-alanyl-gamma-D-glutamyl-meso-2,6-diaminopimelate + ADP + phosphate + H(+). The protein operates within cell wall biogenesis; peptidoglycan biosynthesis. In terms of biological role, catalyzes the addition of meso-diaminopimelic acid to the nucleotide precursor UDP-N-acetylmuramoyl-L-alanyl-D-glutamate (UMAG) in the biosynthesis of bacterial cell-wall peptidoglycan. The protein is UDP-N-acetylmuramoyl-L-alanyl-D-glutamate--2,6-diaminopimelate ligase of Xylella fastidiosa (strain 9a5c).